A 435-amino-acid polypeptide reads, in one-letter code: Protein SUPPRESSOR OF K(+) TRANSPORT GROWTH DEFECT 1 (435 aa).

In terms of domain architecture, MIT spans 7 to 72 (EQAIEYVKQA…LRRAEEIRAV (66 aa)). The interval 73-113 (LDEGGSGPGSNGDAAVATRPKTKPKDGEGGGKDGEDPEQSK) is disordered. The span at 95 to 113 (KPKDGEGGGKDGEDPEQSK) shows a compositional bias: basic and acidic residues. 172–179 (GPPGTGKS) provides a ligand contact to ATP.

The protein belongs to the AAA ATPase family. As to quaternary structure, monomer or homodimer (in nucleotide-free form). Decamer, dodecamer or tetradecamer of two stacked respective homooligomeric rings (when bound to ATP); the dodecameric form seems to be predominant. Interacts with members of the ESCRT-III subcomplex such as LIP5, VPS60-1, VPS2.1, VPS20.1, VPS20.2, VPS24-1, VPS32.1, VPS32.2, CHMP1A and VPS24. Binds to PROS/At4g24370. As to expression, mostly expressed in leaves, to a lower extent in seeds, and barely in roots and flowers (at protein level). Particularly expressed in trichomes.

It is found in the cytoplasm. The protein localises to the nucleus. Its subcellular location is the endosome. The protein resides in the multivesicular body membrane. It localises to the prevacuolar compartment membrane. It catalyses the reaction ATP + H2O = ADP + phosphate + H(+). Its activity is regulated as follows. Activated by LIP5 and PROS. Involved in the transport of biosynthetic membrane proteins from the prevacuolar/endosomal compartment to the vacuole. Required for multivesicular body (MVB) protein sorting. Catalyzes the ATP-dependent dissociation of class E VPS proteins from endosomal membranes, such as the disassembly of the ESCRT-III complex. May also regulate cell cycle. Required during seed development for the formation of mucilage in seed coat and testa. Involved in the maintenance of Na(+)/K(+) homeostasis under salt stress. Required for cell expansion. The chain is Protein SUPPRESSOR OF K(+) TRANSPORT GROWTH DEFECT 1 from Arabidopsis thaliana (Mouse-ear cress).